A 130-amino-acid chain; its full sequence is Small ribosomal subunit protein uS8 (130 aa).

Belongs to the universal ribosomal protein uS8 family. As to quaternary structure, component of the small ribosomal subunit (SSU). Mature N.crassa ribosomes consist of a small (40S) and a large (60S) subunit. The 40S small subunit contains 1 molecule of ribosomal RNA (18S rRNA) and at least 32 different proteins. The large 60S subunit contains 3 rRNA molecules (26S, 5.8S and 5S rRNA) and at least 42 different proteins.

Its subcellular location is the cytoplasm. In terms of biological role, component of the ribosome, a large ribonucleoprotein complex responsible for the synthesis of proteins in the cell. The small ribosomal subunit (SSU) binds messenger RNAs (mRNAs) and translates the encoded message by selecting cognate aminoacyl-transfer RNA (tRNA) molecules. The large subunit (LSU) contains the ribosomal catalytic site termed the peptidyl transferase center (PTC), which catalyzes the formation of peptide bonds, thereby polymerizing the amino acids delivered by tRNAs into a polypeptide chain. The nascent polypeptides leave the ribosome through a tunnel in the LSU and interact with protein factors that function in enzymatic processing, targeting, and the membrane insertion of nascent chains at the exit of the ribosomal tunnel. The chain is Small ribosomal subunit protein uS8 (crp-27) from Neurospora crassa (strain ATCC 24698 / 74-OR23-1A / CBS 708.71 / DSM 1257 / FGSC 987).